The following is a 200-amino-acid chain: Somatotropin (200 aa).

An N-terminal signal peptide occupies residues 1 to 22 (MARVLVVLSVVVASLFFSQGAT). Position 38 (histidine 38) interacts with Zn(2+). Cysteine 71 and cysteine 173 form a disulfide bridge. Glutamate 182 is a binding site for Zn(2+). Cysteine 190 and cysteine 198 are joined by a disulfide.

Belongs to the somatotropin/prolactin family.

The protein localises to the secreted. Its function is as follows. Growth hormone plays an important role in growth control and is involved in the regulation of several anabolic processes. Implicated as an osmoregulatory substance important for seawater adaptation. The polypeptide is Somatotropin (gh) (Heteropneustes fossilis (Stinging catfish)).